The primary structure comprises 402 residues: MSSLQPTLTNERIGVLDVLRGMAIFGILFVNLAHFSYPDMYLSMLGKENFFMDKWSEADFAAADILKFFIQTKCILLFSFLFGFGMVVMMERAENKGKRFVPLYVRRLMALLLFGTIHAFLIWDGDILTEYALLGFVLLLFRKAKPKTLLIWAVSLYLLFSIPFMLTSFDQSNGQEWVQAVTQQAKQAIHVYGSGSLKDIAEQRIHDRLVYMSSNGMLTYNPLNYFFASIPYFSMFLLGAAAAKSRYLHEPEKHRKGLKRLWMAGLVIGIGAQVLYSVTDKEICLLIGAPFLMFFYVTTVVYLYHKTRVRTVLQSFSAVGRMAFTNYLMQSIVCTWIFYHYGLGLYGKVYPAAGVLITIAVCAVQMVFSHLWLRVFRMGPFEWLWRSATYLSWQPIAKKTKV.

Helical transmembrane passes span 13–33, 68–88, 108–128, 149–169, 223–243, 261–281, 283–303, 327–347, and 353–373; these read IGVL…VNLA, FFIQ…GMVV, LMAL…GDIL, LLIW…LTSF, LNYF…AAAA, LWMA…VTDK, ICLL…VVYL, YLMQ…GLYG, and AGVL…HLWL.

It localises to the cell membrane. In terms of biological role, involved in transport. This is an uncharacterized protein from Bacillus subtilis (strain 168).